The primary structure comprises 860 residues: Alanine--tRNA ligase (860 aa).

The Zn(2+) site is built by H563, H567, C665, and H669. The interval 824-843 is disordered; that stretch reads VGGKGGGRPDMAQAGGTDSS.

The protein belongs to the class-II aminoacyl-tRNA synthetase family. Zn(2+) serves as cofactor.

The protein localises to the cytoplasm. The catalysed reaction is tRNA(Ala) + L-alanine + ATP = L-alanyl-tRNA(Ala) + AMP + diphosphate. Catalyzes the attachment of alanine to tRNA(Ala) in a two-step reaction: alanine is first activated by ATP to form Ala-AMP and then transferred to the acceptor end of tRNA(Ala). Also edits incorrectly charged Ser-tRNA(Ala) and Gly-tRNA(Ala) via its editing domain. The polypeptide is Alanine--tRNA ligase (Vibrio vulnificus (strain YJ016)).